The primary structure comprises 874 residues: Oxidation resistance protein 1 (874 aa).

Positions 1 to 89 (MTKDKNSPGL…KTLDKKDGRR (89 aa)) are disordered. The span at 64–89 (RRSELKRFYTIDTGQKKTLDKKDGRR) shows a compositional bias: basic and acidic residues. Position 91 is a phosphoserine (serine 91). The region spanning 99–142 (IEYTVESRDSLNSIALKFDTTPNELVQLNKLFSRAVVTGQVLYV) is the LysM domain. Threonine 119 carries the post-translational modification Phosphothreonine. Residues 151-169 (VESSPSLSPVSPLSPTSSE) show a composition bias toward low complexity. The interval 151–194 (VESSPSLSPVSPLSPTSSEAEFDKTTNPDVHPTEATPSSTFTGI) is disordered. Phosphoserine occurs at positions 201, 202, and 204. A GRAM domain is found at 208-275 (EAFTEKFLKI…EEVMSAAMYK (68 aa)). Phosphoserine occurs at positions 294, 334, and 336. Disordered regions lie at residues 299–406 (CHSK…TNEV) and 431–537 (FQGI…ITSA). Phosphothreonine is present on threonine 341. Serine 346 is modified (phosphoserine). The segment covering 347–362 (PIREELVSSDELRQDK) has biased composition (basic and acidic residues). Positions 363–391 (SSGASSESVQTVNQAEVESLTVKSESTGT) are enriched in polar residues. The segment covering 452 to 466 (SFLHENSLHQEESQK) has biased composition (basic and acidic residues). A Phosphoserine modification is found at serine 496. Residues 510-527 (HTMQQTKQQRENIQQVSQ) are compositionally biased toward polar residues. Residues 551–578 (QRHRLHKFLCLRVGKPMRKTFVSQASAT) are mediates oxidative antimutator activity. The region spanning 713 to 874 (ELLLPDQIEK…IQDIEIWAFE (162 aa)) is the TLDc domain.

The protein belongs to the OXR1 family.

The protein resides in the mitochondrion. May be involved in protection from oxidative damage. This is Oxidation resistance protein 1 (OXR1) from Homo sapiens (Human).